A 90-amino-acid polypeptide reads, in one-letter code: RNA-binding protein Hfq (90 aa).

Residues 9–68 enclose the Sm domain; the sequence is DPFLNALRRERVPVSIYLVNGIKLQGQVESFDQFVILLKNTVSQMVYKHAISTVVPARPF. The tract at residues 71–90 is disordered; sequence TGHQNAQGGYGPQDDVPSGE.

It belongs to the Hfq family. Homohexamer.

Its function is as follows. RNA chaperone that binds small regulatory RNA (sRNAs) and mRNAs to facilitate mRNA translational regulation in response to envelope stress, environmental stress and changes in metabolite concentrations. Also binds with high specificity to tRNAs. In Shewanella putrefaciens (strain CN-32 / ATCC BAA-453), this protein is RNA-binding protein Hfq.